The following is a 448-amino-acid chain: Methylenetetrahydrofolate--tRNA-(uracil-5-)-methyltransferase TrmFO (448 aa).

FAD is bound at residue 10–15 (GAGLAG).

It belongs to the MnmG family. TrmFO subfamily. The cofactor is FAD.

It localises to the cytoplasm. It carries out the reaction uridine(54) in tRNA + (6R)-5,10-methylene-5,6,7,8-tetrahydrofolate + NADH + H(+) = 5-methyluridine(54) in tRNA + (6S)-5,6,7,8-tetrahydrofolate + NAD(+). The catalysed reaction is uridine(54) in tRNA + (6R)-5,10-methylene-5,6,7,8-tetrahydrofolate + NADPH + H(+) = 5-methyluridine(54) in tRNA + (6S)-5,6,7,8-tetrahydrofolate + NADP(+). Functionally, catalyzes the folate-dependent formation of 5-methyl-uridine at position 54 (M-5-U54) in all tRNAs. The sequence is that of Methylenetetrahydrofolate--tRNA-(uracil-5-)-methyltransferase TrmFO from Lactococcus lactis subsp. cremoris (strain SK11).